The following is a 524-amino-acid chain: Inosine-5'-monophosphate dehydrogenase 4 (524 aa).

2 consecutive CBS domains span residues 122-183 and 185-241; these read FINS…VVSE and MTKN…PLAS. At Ser-125 the chain carries Phosphoserine. NAD(+) contacts are provided by residues 279–281 and 329–331; these read DSS and GMG. Positions 331 and 333 each coordinate K(+). Ser-334 lines the IMP pocket. Position 336 (Cys-336) interacts with K(+). Cys-336 acts as the Thioimidate intermediate in catalysis. Residues 369–371, 392–393, and 416–420 contribute to the IMP site; these read DGG, GG, and YRGMG. Residue Arg-438 is the Proton acceptor of the active site. IMP is bound at residue Gln-450. The K(+) site is built by Glu-509, Gly-510, and Gly-511.

This sequence belongs to the IMPDH/GMPR family. As to quaternary structure, homotetramer. Seems to be able to form heterotetramers composed from more than 1 of the 3 IMPDH gene products (IMD2-4). The cofactor is K(+).

The protein resides in the cytoplasm. The enzyme catalyses IMP + NAD(+) + H2O = XMP + NADH + H(+). It functions in the pathway purine metabolism; XMP biosynthesis via de novo pathway; XMP from IMP: step 1/1. Its activity is regulated as follows. Mycophenolic acid (MPA) is a non-competitive inhibitor that prevents formation of the closed enzyme conformation by binding to the same site as the amobile flap. In contrast, mizoribine monophosphate (MZP) is a competitive inhibitor that induces the closed conformation. MPA is a potent inhibitor of mammalian IMPDHs but a poor inhibitor of the bacterial enzymes. MZP is a more potent inhibitor of bacterial IMPDH. Functionally, catalyzes the conversion of inosine 5'-phosphate (IMP) to xanthosine 5'-phosphate (XMP), the first committed and rate-limiting step in the de novo synthesis of guanine nucleotides, and therefore plays an important role in the regulation of cell growth. This chain is Inosine-5'-monophosphate dehydrogenase 4, found in Saccharomyces cerevisiae (strain ATCC 204508 / S288c) (Baker's yeast).